We begin with the raw amino-acid sequence, 174 residues long: Protein GrpE (174 aa).

The interval 1–35 (MAQDIKNEEVEEVQEEEVVETAEETTPEKSELDLA) is disordered. Residues 9 to 25 (EVEEVQEEEVVETAEET) are compositionally biased toward acidic residues. Over residues 26–35 (TPEKSELDLA) the composition is skewed to basic and acidic residues.

The protein belongs to the GrpE family. In terms of assembly, homodimer.

It localises to the cytoplasm. In terms of biological role, participates actively in the response to hyperosmotic and heat shock by preventing the aggregation of stress-denatured proteins, in association with DnaK and GrpE. It is the nucleotide exchange factor for DnaK and may function as a thermosensor. Unfolded proteins bind initially to DnaJ; upon interaction with the DnaJ-bound protein, DnaK hydrolyzes its bound ATP, resulting in the formation of a stable complex. GrpE releases ADP from DnaK; ATP binding to DnaK triggers the release of the substrate protein, thus completing the reaction cycle. Several rounds of ATP-dependent interactions between DnaJ, DnaK and GrpE are required for fully efficient folding. This is Protein GrpE from Streptococcus pneumoniae (strain ATCC 700669 / Spain 23F-1).